The chain runs to 205 residues: GTP cyclohydrolase-2 (205 aa).

49–53 is a GTP binding site; it reads RVHSE. Residues cysteine 54, cysteine 65, and cysteine 67 each coordinate Zn(2+). GTP is bound by residues glutamine 70, 92 to 94, and threonine 114; that span reads EGR. Aspartate 126 serves as the catalytic Proton acceptor. The Nucleophile role is filled by arginine 128. Threonine 149 and lysine 154 together coordinate GTP.

It belongs to the GTP cyclohydrolase II family. Requires Zn(2+) as cofactor.

The enzyme catalyses GTP + 4 H2O = 2,5-diamino-6-hydroxy-4-(5-phosphoribosylamino)-pyrimidine + formate + 2 phosphate + 3 H(+). It participates in cofactor biosynthesis; riboflavin biosynthesis; 5-amino-6-(D-ribitylamino)uracil from GTP: step 1/4. Its function is as follows. Catalyzes the conversion of GTP to 2,5-diamino-6-ribosylamino-4(3H)-pyrimidinone 5'-phosphate (DARP), formate and pyrophosphate. This chain is GTP cyclohydrolase-2, found in Pseudomonas fluorescens (strain SBW25).